Reading from the N-terminus, the 213-residue chain is Neuroligin-4, X-linked (213 aa).

The segment at 1–56 is disordered; that stretch reads FQYVSTTTKVPPPDMTSFPYGTRRSPAKIWPTTKRPAITPANNPKHSKDPHKTGPE. At 1 to 73 the chain is on the extracellular side; the sequence is FQYVSTTTKV…TKRDYSTELS (73 aa). Residues 46–55 are compositionally biased toward basic and acidic residues; the sequence is HSKDPHKTGP. Residues 74-94 form a helical membrane-spanning segment; it reads VTIAVGASLLFLNILAFAALY. Residues 95-213 lie on the Cytoplasmic side of the membrane; the sequence is YKKDKRRHET…LPHGHSTTRV (119 aa). Serine 109 is subject to Phosphoserine.

Belongs to the type-B carboxylesterase/lipase family. As to quaternary structure, homodimer. Interacts with NRXN1 in a calcium-dependent manner. Interaction with neurexins is mediated by heparan sulfate glycan modification on neurexin. Interacts through its C-terminus with DLG4/PSD-95 third PDZ domain.

It is found in the cell membrane. It localises to the postsynaptic density membrane. Functionally, cell surface protein involved in cell-cell-interactions via its interactions with neurexin family members. The protein is Neuroligin-4, X-linked (NLGN4X) of Macaca mulatta (Rhesus macaque).